Here is a 536-residue protein sequence, read N- to C-terminus: Ribulokinase (536 aa).

The protein belongs to the ribulokinase family.

It catalyses the reaction D-ribulose + ATP = D-ribulose 5-phosphate + ADP + H(+). It carries out the reaction L-ribulose + ATP = L-ribulose 5-phosphate + ADP + H(+). The protein operates within carbohydrate degradation; L-arabinose degradation via L-ribulose; D-xylulose 5-phosphate from L-arabinose (bacterial route): step 2/3. This is Ribulokinase from Staphylococcus epidermidis (strain ATCC 12228 / FDA PCI 1200).